The primary structure comprises 523 residues: MEELQGYLEKDRSGQQHFLYPLLFQEYIYALAHDHGLNSSIFYEPVEIFGYDNKSSLALVKRLITRIYQQNFLISSVNDSNQNRFLEHNRFFYSQFYSQIISESVAIYVEIPFSRRLVSFFXEKEIPKYHNLRSIHSIFPFLEDKLSHLNYVSEILIPXPXHIGILGQILQCQIQDVPFLHLLRFFLDEYHNWNSLFITQNKSIYVFSKENKRLFRLLYNSYVFECEFFLLFFRKQSYYLRLTSSEIFLERTHFYRKIEQLRIELEHFVVVCRNYFHRTLWFLKNPFMHYVRYQRKAILASRGTHFLMKKWKYYFVNFWQYYFHFWSRPYRININHLSNYSFYFLGYFSSLLKNSLAVRNQMLENSFLIDTITKKFDTRVPVILLIGSLSKAKFCTVSGHPISKPIWADLSDSDIIDRFGRICRNLSHYHSGSSKKQDLYRIKYILRLSCARTLARKHKSTVRTFLRRLGSGLLEEFFTEEEQVLSLIFSKTTPFTLHGXHRARIWYLDIIRINDLVNHSXLS.

The protein belongs to the intron maturase 2 family. MatK subfamily.

The protein resides in the plastid. Its subcellular location is the chloroplast. In terms of biological role, usually encoded in the trnK tRNA gene intron. Probably assists in splicing its own and other chloroplast group II introns. In Asphodeline lutea (King's spear), this protein is Maturase K.